We begin with the raw amino-acid sequence, 156 residues long: MSRRNISKKRFPETDAIYNSYLVSLLISRILKSGKKTIAKKIVYQAFDIIKKKTNEDPLTVFEKAIRNASPIVEVKARRVGGSTYQVPVEVTGFRATNLSLRWIIRYGDQRVGRSMAIKLANEIIDTANDIGNTIKKKEETHKMAEANKAFAHFRY.

It belongs to the universal ribosomal protein uS7 family. Part of the 30S ribosomal subunit.

It is found in the plastid. The protein localises to the chloroplast. Its function is as follows. One of the primary rRNA binding proteins, it binds directly to 16S rRNA where it nucleates assembly of the head domain of the 30S subunit. This chain is Small ribosomal subunit protein uS7c (rps7), found in Phaeodactylum tricornutum (strain CCAP 1055/1).